A 784-amino-acid polypeptide reads, in one-letter code: DNA ligase (784 aa).

NAD(+)-binding positions include 31-35, 80-81, and Glu120; these read DAEYD and SL. Catalysis depends on Lys122, which acts as the N6-AMP-lysine intermediate. Positions 143, 180, 296, and 320 each coordinate NAD(+). Residues Cys414, Cys417, Cys444, and Cys450 each coordinate Zn(2+). The region spanning 701-784 is the BRCT domain; the sequence is AEGLPLAGQT…AFMAEQGITL (84 aa).

It belongs to the NAD-dependent DNA ligase family. LigA subfamily. Requires Mg(2+) as cofactor. Mn(2+) is required as a cofactor.

The catalysed reaction is NAD(+) + (deoxyribonucleotide)n-3'-hydroxyl + 5'-phospho-(deoxyribonucleotide)m = (deoxyribonucleotide)n+m + AMP + beta-nicotinamide D-nucleotide.. Functionally, DNA ligase that catalyzes the formation of phosphodiester linkages between 5'-phosphoryl and 3'-hydroxyl groups in double-stranded DNA using NAD as a coenzyme and as the energy source for the reaction. It is essential for DNA replication and repair of damaged DNA. The protein is DNA ligase of Pseudomonas entomophila (strain L48).